A 162-amino-acid chain; its full sequence is SsrA-binding protein (162 aa).

Residues 137–154 (HDKREDTKAREWDREKAR) are compositionally biased toward basic and acidic residues. Residues 137–162 (HDKREDTKAREWDREKARIMKNKHRG) are disordered.

Belongs to the SmpB family.

It localises to the cytoplasm. Functionally, required for rescue of stalled ribosomes mediated by trans-translation. Binds to transfer-messenger RNA (tmRNA), required for stable association of tmRNA with ribosomes. tmRNA and SmpB together mimic tRNA shape, replacing the anticodon stem-loop with SmpB. tmRNA is encoded by the ssrA gene; the 2 termini fold to resemble tRNA(Ala) and it encodes a 'tag peptide', a short internal open reading frame. During trans-translation Ala-aminoacylated tmRNA acts like a tRNA, entering the A-site of stalled ribosomes, displacing the stalled mRNA. The ribosome then switches to translate the ORF on the tmRNA; the nascent peptide is terminated with the 'tag peptide' encoded by the tmRNA and targeted for degradation. The ribosome is freed to recommence translation, which seems to be the essential function of trans-translation. In Aeromonas hydrophila subsp. hydrophila (strain ATCC 7966 / DSM 30187 / BCRC 13018 / CCUG 14551 / JCM 1027 / KCTC 2358 / NCIMB 9240 / NCTC 8049), this protein is SsrA-binding protein.